Consider the following 932-residue polypeptide: Protein translocase subunit SecA (932 aa).

ATP is bound by residues glutamine 86, 104-108 (GEGKT), and aspartate 494. Residues 857 to 932 (EDAGAEAHAS…KPAPKRKKRR (76 aa)) are disordered. The span at 905 to 915 (TAGSAGDSNLP) shows a compositional bias: polar residues. The span at 920–932 (KTNKPAPKRKKRR) shows a compositional bias: basic residues.

It belongs to the SecA family. Monomer and homodimer. Part of the essential Sec protein translocation apparatus which comprises SecA, SecYEG and auxiliary proteins SecDF. Other proteins may also be involved.

The protein localises to the cell membrane. It localises to the cytoplasm. The catalysed reaction is ATP + H2O + cellular proteinSide 1 = ADP + phosphate + cellular proteinSide 2.. In terms of biological role, part of the Sec protein translocase complex. Interacts with the SecYEG preprotein conducting channel. Has a central role in coupling the hydrolysis of ATP to the transfer of proteins into and across the cell membrane, serving as an ATP-driven molecular motor driving the stepwise translocation of polypeptide chains across the membrane. The chain is Protein translocase subunit SecA from Renibacterium salmoninarum (strain ATCC 33209 / DSM 20767 / JCM 11484 / NBRC 15589 / NCIMB 2235).